The primary structure comprises 394 residues: Ceramide glucosyltransferase-B (394 aa).

Residues 1-10 (MAVLDLALQG) are Lumenal-facing. The chain crosses the membrane as a helical span at residues 11-32 (LAIFGCILFFVLWFMHFLSIVY). The Cytoplasmic segment spans residues 33-195 (TRLHLNKKVS…QVYFGTSHPR (163 aa)). Residue D92 is a short sequence motif, D1. Position 144 (D144) is a short sequence motif, D2. Residues 196-215 (SYISANVTGIKCVTGMSCLM) form a helical membrane-spanning segment. Residues 216–287 (RKEVLDQAGG…KLRINMLPAT (72 aa)) lie on the Lumenal side of the membrane. D236 is a short sequence motif (D3). The active-site Proton acceptor is D236. The (Q/R)XXRW signature appears at 272–276 (RMIRW). The chain crosses the membrane as a helical span at residues 288–304 (IICEPISECFVASLIIG). At 305-309 (WAAHH) the chain is on the cytoplasmic side. Residues 310-328 (IFRWDIMVFFMCHCLAWFI) traverse the membrane as a helical segment. At 329-348 (FDYIQLRGVQGGPLNFSKLD) the chain is on the lumenal side. Residues 349 to 369 (YAVAWFIRESMTIYIFLSALW) form a helical membrane-spanning segment. The Cytoplasmic segment spans residues 370–394 (DPTISWRTGRYRLRCGGTAEEILDV).

Belongs to the glycosyltransferase 2 family.

The protein resides in the golgi apparatus membrane. It carries out the reaction an N-acylsphing-4-enine + UDP-alpha-D-glucose = a beta-D-glucosyl-(1&lt;-&gt;1')-N-acylsphing-4-enine + UDP + H(+). It catalyses the reaction UDP-alpha-D-xylose + an N-acylsphing-4-enine = a beta-D-xylosyl-(1&lt;-&gt;1')-N-acylsphing-4-enine + UDP + H(+). The enzyme catalyses N-(9Z-octadecenoyl)-sphing-4-enine + UDP-alpha-D-xylose = beta-D-xylosyl-(1&lt;-&gt;1')-N-(9Z-octadecenoyl)-sphing-4-enine + UDP + H(+). Its pathway is lipid metabolism; sphingolipid metabolism. Its function is as follows. Participates in the initial step of the glucosylceramide-based glycosphingolipid/GSL synthetic pathway at the cytosolic surface of the Golgi. Catalyzes the transfer of glucose from UDP-glucose to ceramide to produce glucosylceramide/GlcCer (such as beta-D-glucosyl-(1&lt;-&gt;1')-N-acylsphing-4-enine). Glucosylceramide is the core component of glycosphingolipids/GSLs, amphipathic molecules consisting of a ceramide lipid moiety embedded in the outer leaflet of the membrane, linked to one of hundreds of different externally oriented oligosaccharide structures. Glycosphingolipids are essential components of membrane microdomains that mediate membrane trafficking and signal transduction. They are implicated in many fundamental cellular processes, including growth, differentiation, migration, morphogenesis, cell-to-cell and cell-to-matrix interactions. Catalyzes the synthesis of xylosylceramide/XylCer (such as beta-D-xylosyl-(1&lt;-&gt;1')-N-acylsphing-4-enine) using UDP-Xyl as xylose donor. The sequence is that of Ceramide glucosyltransferase-B (ugcg-b) from Xenopus laevis (African clawed frog).